The primary structure comprises 393 residues: Bifunctional enzyme IspD/IspF (393 aa).

Positions M1–I234 are 2-C-methyl-D-erythritol 4-phosphate cytidylyltransferase. The interval R235–A393 is 2-C-methyl-D-erythritol 2,4-cyclodiphosphate synthase. 2 residues coordinate a divalent metal cation: D241 and H243. Residues D241–H243 and H267–S268 contribute to the 4-CDP-2-C-methyl-D-erythritol 2-phosphate site. Residue H275 participates in a divalent metal cation binding. Residues D289–G291, T365–E368, F372, and R375 each bind 4-CDP-2-C-methyl-D-erythritol 2-phosphate.

This sequence in the N-terminal section; belongs to the IspD/TarI cytidylyltransferase family. IspD subfamily. The protein in the C-terminal section; belongs to the IspF family. A divalent metal cation serves as cofactor.

The enzyme catalyses 2-C-methyl-D-erythritol 4-phosphate + CTP + H(+) = 4-CDP-2-C-methyl-D-erythritol + diphosphate. The catalysed reaction is 4-CDP-2-C-methyl-D-erythritol 2-phosphate = 2-C-methyl-D-erythritol 2,4-cyclic diphosphate + CMP. The protein operates within isoprenoid biosynthesis; isopentenyl diphosphate biosynthesis via DXP pathway; isopentenyl diphosphate from 1-deoxy-D-xylulose 5-phosphate: step 2/6. It participates in isoprenoid biosynthesis; isopentenyl diphosphate biosynthesis via DXP pathway; isopentenyl diphosphate from 1-deoxy-D-xylulose 5-phosphate: step 4/6. Bifunctional enzyme that catalyzes the formation of 4-diphosphocytidyl-2-C-methyl-D-erythritol from CTP and 2-C-methyl-D-erythritol 4-phosphate (MEP) (IspD), and catalyzes the conversion of 4-diphosphocytidyl-2-C-methyl-D-erythritol 2-phosphate (CDP-ME2P) to 2-C-methyl-D-erythritol 2,4-cyclodiphosphate (ME-CPP) with a corresponding release of cytidine 5-monophosphate (CMP) (IspF). This Bradyrhizobium sp. (strain ORS 278) protein is Bifunctional enzyme IspD/IspF.